Consider the following 204-residue polypeptide: GTP cyclohydrolase-2 (204 aa).

49 to 53 contributes to the GTP binding site; it reads RIHSE. Positions 54, 65, and 67 each coordinate Zn(2+). GTP-binding positions include glutamine 70, 92 to 94, and threonine 114; that span reads EGR. Aspartate 126 serves as the catalytic Proton acceptor. The Nucleophile role is filled by arginine 128. 2 residues coordinate GTP: threonine 149 and lysine 154.

This sequence belongs to the GTP cyclohydrolase II family. The cofactor is Zn(2+).

It carries out the reaction GTP + 4 H2O = 2,5-diamino-6-hydroxy-4-(5-phosphoribosylamino)-pyrimidine + formate + 2 phosphate + 3 H(+). It participates in cofactor biosynthesis; riboflavin biosynthesis; 5-amino-6-(D-ribitylamino)uracil from GTP: step 1/4. In terms of biological role, catalyzes the conversion of GTP to 2,5-diamino-6-ribosylamino-4(3H)-pyrimidinone 5'-phosphate (DARP), formate and pyrophosphate. This chain is GTP cyclohydrolase-2, found in Shewanella baltica (strain OS223).